A 141-amino-acid chain; its full sequence is Hemoglobin subunit alpha (141 aa).

The Globin domain occupies 1–141 (VLSPADKSNV…VSTVLVSKYR (141 aa)). Serine 3 is modified (phosphoserine). 2 positions are modified to N6-succinyllysine: lysine 7 and lysine 11. An N6-acetyllysine; alternate modification is found at lysine 16. Lysine 16 carries the post-translational modification N6-succinyllysine; alternate. A Phosphotyrosine modification is found at tyrosine 24. A Phosphoserine modification is found at serine 35. Lysine 40 carries the post-translational modification N6-succinyllysine. The residue at position 49 (serine 49) is a Phosphoserine. O2 is bound at residue histidine 58. Heme b is bound at residue histidine 87. A Phosphoserine modification is found at serine 102. Threonine 108 carries the post-translational modification Phosphothreonine. Serine 124 is subject to Phosphoserine. Threonine 134 is modified (phosphothreonine). Serine 138 carries the post-translational modification Phosphoserine.

The protein belongs to the globin family. In terms of assembly, heterotetramer of two alpha chains and two beta chains. In terms of tissue distribution, red blood cells.

Involved in oxygen transport from the lung to the various peripheral tissues. In terms of biological role, hemopressin acts as an antagonist peptide of the cannabinoid receptor CNR1. Hemopressin-binding efficiently blocks cannabinoid receptor CNR1 and subsequent signaling. The protein is Hemoglobin subunit alpha (HBA) of Chalinolobus morio (Chocolate-wattled bat).